The primary structure comprises 576 residues: Dihydroxy-acid dehydratase (576 aa).

Position 56 (Cys56) interacts with [2Fe-2S] cluster. Asp88 is a Mg(2+) binding site. Residue Cys129 coordinates [2Fe-2S] cluster. Residues Asp130 and Lys131 each coordinate Mg(2+). The residue at position 131 (Lys131) is an N6-carboxylysine. Cys201 lines the [2Fe-2S] cluster pocket. Residue Glu453 participates in Mg(2+) binding. Ser479 acts as the Proton acceptor in catalysis.

The protein belongs to the IlvD/Edd family. In terms of assembly, homodimer. It depends on [2Fe-2S] cluster as a cofactor. Requires Mg(2+) as cofactor.

It catalyses the reaction (2R)-2,3-dihydroxy-3-methylbutanoate = 3-methyl-2-oxobutanoate + H2O. The enzyme catalyses (2R,3R)-2,3-dihydroxy-3-methylpentanoate = (S)-3-methyl-2-oxopentanoate + H2O. It participates in amino-acid biosynthesis; L-isoleucine biosynthesis; L-isoleucine from 2-oxobutanoate: step 3/4. It functions in the pathway amino-acid biosynthesis; L-valine biosynthesis; L-valine from pyruvate: step 3/4. Functionally, functions in the biosynthesis of branched-chain amino acids. Catalyzes the dehydration of (2R,3R)-2,3-dihydroxy-3-methylpentanoate (2,3-dihydroxy-3-methylvalerate) into 2-oxo-3-methylpentanoate (2-oxo-3-methylvalerate) and of (2R)-2,3-dihydroxy-3-methylbutanoate (2,3-dihydroxyisovalerate) into 2-oxo-3-methylbutanoate (2-oxoisovalerate), the penultimate precursor to L-isoleucine and L-valine, respectively. The protein is Dihydroxy-acid dehydratase of Parvibaculum lavamentivorans (strain DS-1 / DSM 13023 / NCIMB 13966).